The primary structure comprises 491 residues: Probable CtpA-like serine protease (491 aa).

A disordered region spans residues 1 to 22; sequence MNDHQKNHATSQDDNTKSTPSK. Polar residues predominate over residues 8 to 22; it reads HATSQDDNTKSTPSK. A helical membrane pass occupies residues 31–51; that stretch reads LWHFILVILGIILLTSIITVV. The 83-residue stretch at 119–201 folds into the PDZ domain; it reads TKQFNEGVSG…TYVTLTIKRG (83 aa). Residues Ser-324, Asp-335, and Lys-349 each act as charge relay system in the active site.

Belongs to the peptidase S41A family.

Its subcellular location is the cell membrane. The sequence is that of Probable CtpA-like serine protease from Staphylococcus epidermidis (strain ATCC 12228 / FDA PCI 1200).